The chain runs to 290 residues: Nucleotide-binding protein XfasM23_0667 (290 aa).

13–20 (GLSGSGKS) contributes to the ATP binding site. Position 65–68 (65–68 (DIRS)) interacts with GTP.

Belongs to the RapZ-like family.

Displays ATPase and GTPase activities. The polypeptide is Nucleotide-binding protein XfasM23_0667 (Xylella fastidiosa (strain M23)).